A 309-amino-acid chain; its full sequence is Dihydroorotate dehydrogenase B (NAD(+)), catalytic subunit (309 aa).

FMN-binding positions include S21 and 45–46; that span reads KA. Residues K45 and 69–73 contribute to the substrate site; that span reads NAIGL. The FMN site is built by N99 and N127. Residue N127 coordinates substrate. C130 (nucleophile) is an active-site residue. The FMN site is built by K165 and I191. 192 to 193 is a substrate binding site; sequence NT. Residues G217, 243-244, and 265-266 contribute to the FMN site; these read GG and GT.

It belongs to the dihydroorotate dehydrogenase family. Type 1 subfamily. In terms of assembly, heterotetramer of 2 PyrK and 2 PyrD type B subunits. It depends on FMN as a cofactor.

The protein resides in the cytoplasm. It catalyses the reaction (S)-dihydroorotate + NAD(+) = orotate + NADH + H(+). It participates in pyrimidine metabolism; UMP biosynthesis via de novo pathway; orotate from (S)-dihydroorotate (NAD(+) route): step 1/1. Functionally, catalyzes the conversion of dihydroorotate to orotate with NAD(+) as electron acceptor. The protein is Dihydroorotate dehydrogenase B (NAD(+)), catalytic subunit (pyrD) of Bacillus cereus (strain AH187).